A 145-amino-acid chain; its full sequence is 3-dehydroquinate dehydratase (145 aa).

Tyr-23 functions as the Proton acceptor in the catalytic mechanism. The substrate site is built by Asn-74, His-80, and Asp-87. The active-site Proton donor is His-100. Residues 101 to 102 (LS) and Arg-111 each bind substrate.

It belongs to the type-II 3-dehydroquinase family. As to quaternary structure, homododecamer.

It catalyses the reaction 3-dehydroquinate = 3-dehydroshikimate + H2O. It participates in metabolic intermediate biosynthesis; chorismate biosynthesis; chorismate from D-erythrose 4-phosphate and phosphoenolpyruvate: step 3/7. In terms of biological role, catalyzes a trans-dehydration via an enolate intermediate. This Halalkalibacterium halodurans (strain ATCC BAA-125 / DSM 18197 / FERM 7344 / JCM 9153 / C-125) (Bacillus halodurans) protein is 3-dehydroquinate dehydratase.